The following is a 79-amino-acid chain: Small ribosomal subunit protein bS18 (79 aa).

The protein belongs to the bacterial ribosomal protein bS18 family. As to quaternary structure, part of the 30S ribosomal subunit. Forms a tight heterodimer with protein bS6.

Functionally, binds as a heterodimer with protein bS6 to the central domain of the 16S rRNA, where it helps stabilize the platform of the 30S subunit. The protein is Small ribosomal subunit protein bS18 of Renibacterium salmoninarum (strain ATCC 33209 / DSM 20767 / JCM 11484 / NBRC 15589 / NCIMB 2235).